An 83-amino-acid polypeptide reads, in one-letter code: Defensin-like protein 194 (83 aa).

An N-terminal signal peptide occupies residues 1-27; that stretch reads MAMKSVSNFAIFLILFLVTSEISEIEA. Cystine bridges form between cysteine 32/cysteine 78, cysteine 44/cysteine 68, cysteine 53/cysteine 73, and cysteine 57/cysteine 75.

Belongs to the DEFL family. Protease inhibitor I18 (RTI/MTI-2) subfamily.

It localises to the secreted. This Arabidopsis thaliana (Mouse-ear cress) protein is Defensin-like protein 194 (ATTI3).